The sequence spans 120 residues: Large ribosomal subunit protein uL18 (120 aa).

The protein belongs to the universal ribosomal protein uL18 family. Part of the 50S ribosomal subunit; part of the 5S rRNA/L5/L18/L25 subcomplex. Contacts the 5S and 23S rRNAs.

This is one of the proteins that bind and probably mediate the attachment of the 5S RNA into the large ribosomal subunit, where it forms part of the central protuberance. This is Large ribosomal subunit protein uL18 from Gluconobacter oxydans (strain 621H) (Gluconobacter suboxydans).